The following is a 1761-amino-acid chain: MKDNIPTGSIIIPLNHHPQQQQIPQQQEQQQQQQQQQQQQQQQQQQQQQQQQQQQQQQQQQQQEQQNNNNNINDNINGNNNSNEIKNTKDANITNNNGTSIIISLSPPPSPALNSSSSSTINSNNTTISGGDNENNNNNTNNTNNNINNSNNSNNNNSNNNSNNNNNNNNNNNNNNNNNNNNNNNNNNNNNNNNNNTNEEGNKTNINTTNNNSQNININNGINKNTRNNNNNNNNNNKQMTPPTFKNNLQVKHQPQSSSGGSIGGSNKLSLSKRVKSTTSSRASIIDSIDIDIVFNSLKNSITSKNSFVLGVHRHRMSSISSISNTTNETTTTTTTTTNTTIEDHQIGSIGNNNNNNNNNNNNNNNYFNVNNGNSNNINNYNNSGNGNNNNNNNNNNNNNNNNNNNNNNNNNNNNNNNNHFNSYSNNNNNSNSNNNSNNNLHGLNNNNNGVMESSDFNSDTVGRGSIFTVSNSDVNSDSNVGLNQPSFNDLTITCDTLTETDEEDLMEKFLEDSDPDIDEEDDDDDFNEEEFMKFQTQFLHNKSQNSSLNINNNNNSSNNNNINNNNNNNNIMAGSTSSVIYKNSGKPPLNENNNNNINNDNTVCNINNNNNSNNNKSNNSNNSNNSFKDDISSDEEPETDSDTEFKNNHHTNYHNSPKNQKHVDRKPFVNSKNNTNTNTNTHNTYNNNKNNNNNNTFEQQSNEDEESYSGSYKSSQNSVIYKPNLVSSPNFKSSLSSSSLISVGTNSLKNSPFPPSSPILSPQTDDPNNNNNNNNSNTTISQPLPIALNVSIESPRAFYNSGSNNNNNNNNNNNNNNNNNNNNTNSTSATTPIIQAQTHPTTQIPTSDIDTSNSDNNNNNNNNNTSDNNFNDYNNDYNNDYNNYETEFLPPKKTPPPPIPTKMSSTPPSSTSSFLSTSSVTSVNSNNSVTSSTSTNTSNSSSPKHSSSQKSKSVFSKIIKEGKKRLATKFNSHHHHNSGNNSSNSNNNNNDDEVPTYIHIYRGNGDESWRVKVTSSTTVRDLLSMSLTSTVKGEPPSLKLYLTSSLNSCTCVSSPNNLSSAPAVSSSSSSSTTLETTTIITSASPSSSSSSFTSPTTTNSLNSHLNHSNNINNNNNNNTNNNNNNNNNNNNNNNNNNTDRTNSNCTCNVNKPEKELNEDDKVLSVQKKWSGPSIFVLKNNCTKSSSSSTSSSSSSNNTNNNNNNNNTINNNSNNTGTRYSVSSITSESSEQSSNSHNSLNNNNHNNNNNNHSHNHNNSNNNNHHHHHHHHHNNNNNQNGQQEGVADSSSSSPWSSPALSSPSKQHSLQYFENIPTLALDSTNNNNNNNNDTDSTSSNMGTPTTSRRITTIFQKQHSRNNSSNNQNNNNINNNNNNNNNNNNNNNNEHLTPLSNSTSLSSASSISFLNSSNGNNSPNSNNSNSNNNNNNNNNNNNNNNNKKTTTTTTTTTMNSNGECWKNAERPRTGVRWISSTDLFLIKKIGAGSFSKVYKAKYMGEIVAIKVLKGEATSEQIELFKKEYDILSLVSSQNLIKFYGACKEKKLRMVTEYCQHGSLYHIMSKRKMDISWPLVFKWMHQAVDGINSLHTMRPALVHRDIKSQNLLINSQFDLKVADFGLAKPTELQTGSNSTIKGTMAYCAPELYNGISYSEKADVYSLGIVLWEITTRVITGKYQRPYEDNTEISFDFQIVIMSSKQGIRPTMPPNVPPKLSYLIQKCWNQDPNERPSCQQILLAITSLYDDYIYNPSRYNDLILNNDLNN.

12 disordered regions span residues 18–47 (PQQQQIPQQQEQQQQQQQQQQQQQQQQQQQ), 60–269 (QQQQ…SNKL), 322–458 (SISN…SDFN), 545–717 (QNSS…KSSQ), 749–783 (LKNSPFPPSSPILSPQTDDPNNNNNNNNSNTTISQ), 798–830 (AFYNSGSNNNNNNNNNNNNNNNNNNNNTNSTSA), 842–956 (TTQI…KSVF), 972–997 (NSHHHHNSGNNSSNSNNNNNDDEVPT), 1081–1151 (ITSA…CNVN), 1179–1305 (KNNC…PSKQ), 1318–1343 (ALDSTNNNNNNNNDTDSTSSNMGTPT), and 1355–1459 (QHSR…ECWK). 4 stretches are compositionally biased toward low complexity: residues 19 to 47 (QQQQIPQQQEQQQQQQQQQQQQQQQQQQQ), 60 to 85 (QQQQEQQNNNNNINDNINGNNNSNEI), 92 to 105 (NITNNNGTSIIISL), and 112 to 237 (ALNS…NNNN). Over residues 238 to 256 (KQMTPPTFKNNLQVKHQPQ) the composition is skewed to polar residues. Low complexity-rich tracts occupy residues 257–269 (SSSGGSIGGSNKL), 322–341 (SISNTTNETTTTTTTTTNTT), 348–451 (GSIG…NNGV), and 546–572 (NSSLNINNNNNSSNNNNINNNNNNNNI). Residues 573–582 (MAGSTSSVIY) show a composition bias toward polar residues. The span at 591–627 (NENNNNNINNDNTVCNINNNNNSNNNKSNNSNNSNNS) shows a compositional bias: low complexity. The segment covering 633 to 643 (SSDEEPETDSD) has biased composition (acidic residues). Composition is skewed to low complexity over residues 674 to 697 (NNTNTNTNTHNTYNNNKNNNNNNT), 759 to 778 (PILSPQTDDPNNNNNNNNSN), 805 to 824 (NNNNNNNNNNNNNNNNNNNN), 847 to 885 (TSDIDTSNSDNNNNNNNNNTSDNNFNDYNNDYNNDYNNY), 902 to 956 (TKMS…KSVF), 979 to 990 (SGNNSSNSNNNN), 1081 to 1149 (ITSA…CTCN), and 1180 to 1262 (NNCT…SNNN). A compositionally biased stretch (basic residues) spans 1263-1273 (NHHHHHHHHHN). 4 stretches are compositionally biased toward low complexity: residues 1288–1303 (SSSSSPWSSPALSSPS), 1320–1338 (DSTNNNNNNNNDTDSTSSN), 1359–1386 (NNSSNNQNNNNINNNNNNNNNNNNNNNN), and 1393–1454 (SNST…MNSN). Residues 1476 to 1744 (LFLIKKIGAG…AITSLYDDYI (269 aa)) form the Protein kinase domain. ATP is bound by residues 1482-1490 (IGAGSFSKV) and Lys1503. Residue Asp1597 is the Proton acceptor of the active site.

The protein belongs to the protein kinase superfamily. TKL Ser/Thr protein kinase family.

The enzyme catalyses L-seryl-[protein] + ATP = O-phospho-L-seryl-[protein] + ADP + H(+). It catalyses the reaction L-threonyl-[protein] + ATP = O-phospho-L-threonyl-[protein] + ADP + H(+). In Dictyostelium discoideum (Social amoeba), this protein is Probable serine/threonine-protein kinase DDB_G0282963.